The chain runs to 206 residues: Octanoyltransferase (206 aa).

The 177-residue stretch at 30-206 folds into the BPL/LPL catalytic domain; the sequence is PETNDEIWLV…EFVTLLNNSI (177 aa). Substrate contacts are provided by residues 69-76, 137-139, and 150-152; these read RGGQVTYH, SLG, and GIA. Cys168 serves as the catalytic Acyl-thioester intermediate.

This sequence belongs to the LipB family.

It localises to the cytoplasm. It carries out the reaction octanoyl-[ACP] + L-lysyl-[protein] = N(6)-octanoyl-L-lysyl-[protein] + holo-[ACP] + H(+). Its pathway is protein modification; protein lipoylation via endogenous pathway; protein N(6)-(lipoyl)lysine from octanoyl-[acyl-carrier-protein]: step 1/2. Catalyzes the transfer of endogenously produced octanoic acid from octanoyl-acyl-carrier-protein onto the lipoyl domains of lipoate-dependent enzymes. Lipoyl-ACP can also act as a substrate although octanoyl-ACP is likely to be the physiological substrate. The chain is Octanoyltransferase from Francisella tularensis subsp. tularensis (strain FSC 198).